The following is a 204-amino-acid chain: Putative 3-methyladenine DNA glycosylase (204 aa).

Belongs to the DNA glycosylase MPG family.

The chain is Putative 3-methyladenine DNA glycosylase from Mycobacterium sp. (strain KMS).